We begin with the raw amino-acid sequence, 78 residues long: Gas vesicle protein A (78 aa).

The protein belongs to the gas vesicle GvpA family. The gas vesicle shell is 2 nm thick and consists of a single layer of this protein. It forms helical ribs nearly perpendicular to the long axis of the vesicle.

It is found in the gas vesicle shell. Gas vesicles are hollow, gas filled proteinaceous nanostructures found in some microorganisms. During planktonic growth they allow positioning of the organism at a favorable depth for light or nutrient acquisition. GvpA forms the protein shell. The protein is Gas vesicle protein A of Halorubrum vacuolatum (Natronobacterium vacuolatum).